A 142-amino-acid polypeptide reads, in one-letter code: Baculoviral IAP repeat-containing protein 5 (142 aa).

Residues 18-88 (RISTFKNWPF…KHSSGCAFLS (71 aa)) form a BIR repeat. S20 is subject to Phosphoserine; by AURKC. K23 bears the N6-acetyllysine mark. Residue T34 is modified to Phosphothreonine; by CDK1 and CDK15. A Phosphothreonine modification is found at T48. C57, C60, H77, and C84 together coordinate Zn(2+). An N6-acetyllysine mark is found at K90, K110, K112, and K115. T117 is modified (phosphothreonine; by AURKB). K129 is subject to N6-acetyllysine.

The protein belongs to the IAP family. Monomer or homodimer. Exists as a homodimer in the apo state and as a monomer in the CPC-bound state. The monomer protects cells against apoptosis more efficiently than the dimer. Only the dimeric form is capable of enhancing tubulin stability in cells. When phosphorylated, interacts with LAMTOR5/HBXIP; the resulting complex binds pro-CASP9, as well as active CASP9, but much less efficiently. Component of the chromosomal passenger complex (CPC) composed of at least BIRC5/survivin, CDCA8/borealin, INCENP, AURKB or AURKC; in the complex forms a triple-helix bundle-based subcomplex with INCENP and CDCA8. Interacts with JTB. Interacts (via BIR domain) with histone H3 phosphorylated at 'Thr-3' (H3pT3). Interacts with EVI5. Interacts with GTP-bound RAN in both the S and M phases of the cell cycle. Interacts with USP9X. Interacts with tubulin. Interacts with BIRC2/c-IAP1. The acetylated form at Lys-129 interacts with STAT3. The monomeric form deacetylated at Lys-129 interacts with XPO1/CRM1. The monomeric form interacts with XIAP/BIRC4. Both the dimeric and monomeric form can interact with DIABLO/SMAC. Interacts with BIRC6/bruce. Interacts with FBXL7; this interaction facilitates the polyubiquitination and subsequent proteasomal degradation of BIRC5 by the SCF(FBXL7) E3 ubiquitin-protein ligase complex. In terms of processing, ubiquitinated by the Cul9-RING ubiquitin-protein ligase complex, leading to its degradation. Ubiquitination is required for centrosomal targeting. Deubiquitinated by USP35 or USP38; leading to stabilization. Post-translationally, acetylation at Lys-129 results in its homodimerization, while deacetylation promotes the formation of monomers which heterodimerize with XPO1/CRM1 which facilitates its nuclear export. The acetylated form represses STAT3 transactivation. The dynamic equilibrium between its acetylation and deacetylation at Lys-129 determines its interaction with XPO1/CRM1, its subsequent subcellular localization, and its ability to inhibit STAT3 transactivation. In vitro phosphorylation at Thr-117 by AURKB prevents interaction with INCENP and localization to mitotic chromosomes. Phosphorylation at Thr-48 by CK2 is critical for its mitotic and anti-apoptotic activities. Phosphorylation at Thr-34 by CDK15 is critical for its anti-apoptotic activity. Phosphorylation at Ser-20 by AURKC is critical for regulation of proper chromosome alignment and segregation, and possibly cytokinesis.

It localises to the cytoplasm. The protein localises to the nucleus. Its subcellular location is the chromosome. It is found in the centromere. The protein resides in the cytoskeleton. It localises to the spindle. The protein localises to the kinetochore. Its subcellular location is the midbody. Multitasking protein that has dual roles in promoting cell proliferation and preventing apoptosis. Component of a chromosome passage protein complex (CPC) which is essential for chromosome alignment and segregation during mitosis and cytokinesis. Acts as an important regulator of the localization of this complex; directs CPC movement to different locations from the inner centromere during prometaphase to midbody during cytokinesis and participates in the organization of the center spindle by associating with polymerized microtubules. Involved in the recruitment of CPC to centromeres during early mitosis via association with histone H3 phosphorylated at 'Thr-3' (H3pT3) during mitosis. The complex with RAN plays a role in mitotic spindle formation by serving as a physical scaffold to help deliver the RAN effector molecule TPX2 to microtubules. May counteract a default induction of apoptosis in G2/M phase. The acetylated form represses STAT3 transactivation of target gene promoters. May play a role in neoplasia. Inhibitor of CASP3 and CASP7. Essential for the maintenance of mitochondrial integrity and function. The sequence is that of Baculoviral IAP repeat-containing protein 5 (BIRC5) from Felis catus (Cat).